Consider the following 379-residue polypeptide: Alanine racemase (379 aa).

Lys-35 (proton acceptor; specific for D-alanine) is an active-site residue. Residue Lys-35 is modified to N6-(pyridoxal phosphate)lysine. Arg-133 is a substrate binding site. The active-site Proton acceptor; specific for L-alanine is Tyr-265. Met-312 contacts substrate.

The protein belongs to the alanine racemase family. Pyridoxal 5'-phosphate is required as a cofactor.

It carries out the reaction L-alanine = D-alanine. It functions in the pathway amino-acid biosynthesis; D-alanine biosynthesis; D-alanine from L-alanine: step 1/1. In terms of biological role, catalyzes the interconversion of L-alanine and D-alanine. May also act on other amino acids. The sequence is that of Alanine racemase (alr) from Treponema denticola (strain ATCC 35405 / DSM 14222 / CIP 103919 / JCM 8153 / KCTC 15104).